Consider the following 132-residue polypeptide: Phosphoribosyl-AMP cyclohydrolase (132 aa).

Aspartate 79 lines the Mg(2+) pocket. Cysteine 80 contacts Zn(2+). Mg(2+) is bound by residues aspartate 81 and aspartate 83. Zn(2+) contacts are provided by cysteine 100 and cysteine 107.

Belongs to the PRA-CH family. As to quaternary structure, homodimer. Mg(2+) is required as a cofactor. It depends on Zn(2+) as a cofactor.

The protein resides in the cytoplasm. It carries out the reaction 1-(5-phospho-beta-D-ribosyl)-5'-AMP + H2O = 1-(5-phospho-beta-D-ribosyl)-5-[(5-phospho-beta-D-ribosylamino)methylideneamino]imidazole-4-carboxamide. It participates in amino-acid biosynthesis; L-histidine biosynthesis; L-histidine from 5-phospho-alpha-D-ribose 1-diphosphate: step 3/9. Functionally, catalyzes the hydrolysis of the adenine ring of phosphoribosyl-AMP. The sequence is that of Phosphoribosyl-AMP cyclohydrolase from Acidovorax sp. (strain JS42).